The primary structure comprises 374 residues: Biotin synthase (374 aa).

Residues 49–276 enclose the Radical SAM core domain; it reads NEVQVSTLLS…KSHVRLSAGR (228 aa). [4Fe-4S] cluster-binding residues include Cys64, Cys68, and Cys71. Residues Cys108, Cys139, Cys199, and Arg271 each coordinate [2Fe-2S] cluster. A disordered region spans residues 344–374; that stretch reads QQQEQAEGSNDLFIDATKPKVAAKQQHATEA.

This sequence belongs to the radical SAM superfamily. Biotin synthase family. In terms of assembly, homodimer. It depends on [4Fe-4S] cluster as a cofactor. Requires [2Fe-2S] cluster as cofactor.

It catalyses the reaction (4R,5S)-dethiobiotin + (sulfur carrier)-SH + 2 reduced [2Fe-2S]-[ferredoxin] + 2 S-adenosyl-L-methionine = (sulfur carrier)-H + biotin + 2 5'-deoxyadenosine + 2 L-methionine + 2 oxidized [2Fe-2S]-[ferredoxin]. It functions in the pathway cofactor biosynthesis; biotin biosynthesis; biotin from 7,8-diaminononanoate: step 2/2. In terms of biological role, catalyzes the conversion of dethiobiotin (DTB) to biotin by the insertion of a sulfur atom into dethiobiotin via a radical-based mechanism. The protein is Biotin synthase of Alteromonas mediterranea (strain DSM 17117 / CIP 110805 / LMG 28347 / Deep ecotype).